A 414-amino-acid chain; its full sequence is WW domain-containing oxidoreductase (414 aa).

The interval 1–23 (MAALKYAGLEDTDSEEELPPGWE) is disordered. Residues 16–49 (EELPPGWEERTTKDGWVYYANHLEEKTQWEHPKS) form the WW 1 domain. The Nuclear localization signal signature appears at 50 to 55 (GKRKRV). The region spanning 57 to 90 (GGLPYGWEQETDENGQVYFVDHINKRTTYLDPRL) is the WW 2 domain. An NADP(+)-binding site is contributed by 131–137 (GANSGIG). A substrate-binding site is contributed by Ser260. Tyr293 serves as the catalytic Proton acceptor.

It belongs to the short-chain dehydrogenases/reductases (SDR) family.

Its subcellular location is the cytoplasm. It localises to the mitochondrion. The protein resides in the golgi apparatus. The protein localises to the lysosome. Its function is as follows. Putative oxidoreductase. Acts as a tumor suppressor and plays a role in apoptosis. May function synergistically with p53/TP53 to control genotoxic stress-induced cell death. Plays a role in TGFB1 signaling and TGFB1-mediated cell death. May also play a role in tumor necrosis factor (TNF)-mediated cell death. Required for normal bone development. Inhibits Wnt signaling. This Gallus gallus (Chicken) protein is WW domain-containing oxidoreductase (WWOX).